Reading from the N-terminus, the 148-residue chain is Glutamate mutase sigma subunit (148 aa).

The B12-binding domain maps to 3–140; that stretch reads NPTIVIGVIG…KRDIERVMQS (138 aa). Adenosylcob(III)alamin is bound by residues 13 to 17, H16, 61 to 63, and 93 to 97; these read ADCHA, SSI, and NLVIG.

Belongs to the methylaspartate mutase GlmS subunit family. Heterotetramer composed of 2 epsilon subunits (GlmE) and 2 sigma subunits (GlmS). GlmE exists as a homodimer and GlmS as a monomer. It depends on adenosylcob(III)alamin as a cofactor.

It catalyses the reaction (2S,3S)-3-methyl-L-aspartate = L-glutamate. Its pathway is amino-acid degradation; L-glutamate degradation via mesaconate pathway; acetate and pyruvate from L-glutamate: step 1/4. In terms of biological role, catalyzes the carbon skeleton rearrangement of L-glutamate to L-threo-3-methylaspartate ((2S,3S)-3-methylaspartate). This Yersinia enterocolitica serotype O:8 / biotype 1B (strain NCTC 13174 / 8081) protein is Glutamate mutase sigma subunit.